We begin with the raw amino-acid sequence, 433 residues long: UPF0597 protein DNO_0106 (433 aa).

This sequence belongs to the UPF0597 family.

The polypeptide is UPF0597 protein DNO_0106 (Dichelobacter nodosus (strain VCS1703A)).